The sequence spans 163 residues: CASP-like protein 1C3 (163 aa).

The Cytoplasmic segment spans residues M1–K6. Residues I7–M27 form a helical membrane-spanning segment. Over V28–K52 the chain is Extracellular. The N-linked (GlcNAc...) asparagine glycan is linked to N38. The helical transmembrane segment at Y53–F73 threads the bilayer. Residues K74–R79 lie on the Cytoplasmic side of the membrane. A helical membrane pass occupies residues L80–L100. Over A101–Q128 the chain is Extracellular. The helical transmembrane segment at V129 to C149 threads the bilayer. At S150 to P163 the chain is on the cytoplasmic side.

This sequence belongs to the Casparian strip membrane proteins (CASP) family. In terms of assembly, homodimer and heterodimers.

Its subcellular location is the cell membrane. The chain is CASP-like protein 1C3 from Populus trichocarpa (Western balsam poplar).